Here is a 351-residue protein sequence, read N- to C-terminus: Ribosomal RNA small subunit methyltransferase H (351 aa).

Residues 48–50, Asp67, Phe94, Asp115, and Gln122 each bind S-adenosyl-L-methionine; that span reads GGY. The disordered stretch occupies residues 298-351; it reads GPVLPSEAETEVNPRARSAKLRAGERTDGPAPPPLSAIETLASLPAPQGRGTRR.

The protein belongs to the methyltransferase superfamily. RsmH family.

It localises to the cytoplasm. The enzyme catalyses cytidine(1402) in 16S rRNA + S-adenosyl-L-methionine = N(4)-methylcytidine(1402) in 16S rRNA + S-adenosyl-L-homocysteine + H(+). In terms of biological role, specifically methylates the N4 position of cytidine in position 1402 (C1402) of 16S rRNA. This Methylorubrum populi (strain ATCC BAA-705 / NCIMB 13946 / BJ001) (Methylobacterium populi) protein is Ribosomal RNA small subunit methyltransferase H.